The following is a 261-amino-acid chain: Phosphatidylglycerol--prolipoprotein diacylglyceryl transferase (261 aa).

4 helical membrane passes run 17–37, 59–79, 94–114, and 121–141; these read FAIHWYGVMYLLAFAQFLLLG, LLFAGVLGVVLGGRLGYTLFY, IWEGGMSFHGGLLGVLCALLW, and TSFFVVSDLVAPLIPFGLAFG. R142 is a binding site for a 1,2-diacyl-sn-glycero-3-phospho-(1'-sn-glycerol). 2 helical membrane-spanning segments follow: residues 174–194 and 228–248; these read PSQIYQLLGEGIFLGIVLWIY and FLGLLGLGLSMGQWLCVPMII.

Belongs to the Lgt family.

It localises to the cell inner membrane. The enzyme catalyses L-cysteinyl-[prolipoprotein] + a 1,2-diacyl-sn-glycero-3-phospho-(1'-sn-glycerol) = an S-1,2-diacyl-sn-glyceryl-L-cysteinyl-[prolipoprotein] + sn-glycerol 1-phosphate + H(+). The protein operates within protein modification; lipoprotein biosynthesis (diacylglyceryl transfer). Functionally, catalyzes the transfer of the diacylglyceryl group from phosphatidylglycerol to the sulfhydryl group of the N-terminal cysteine of a prolipoprotein, the first step in the formation of mature lipoproteins. This is Phosphatidylglycerol--prolipoprotein diacylglyceryl transferase from Polynucleobacter asymbioticus (strain DSM 18221 / CIP 109841 / QLW-P1DMWA-1) (Polynucleobacter necessarius subsp. asymbioticus).